Here is a 393-residue protein sequence, read N- to C-terminus: Argininosuccinate synthase (393 aa).

ATP is bound by residues 7–15 (AYSGGLDTS) and Ala-34. L-citrulline-binding residues include Tyr-85 and Ser-90. Gly-115 contributes to the ATP binding site. Positions 117, 121, and 122 each coordinate L-aspartate. Asn-121 is a binding site for L-citrulline. L-citrulline contacts are provided by Arg-125, Ser-176, Ser-185, Glu-261, and Tyr-273.

Belongs to the argininosuccinate synthase family. Type 1 subfamily. Homotetramer.

It is found in the cytoplasm. The catalysed reaction is L-citrulline + L-aspartate + ATP = 2-(N(omega)-L-arginino)succinate + AMP + diphosphate + H(+). The protein operates within amino-acid biosynthesis; L-arginine biosynthesis; L-arginine from L-ornithine and carbamoyl phosphate: step 2/3. The polypeptide is Argininosuccinate synthase (Ehrlichia canis (strain Jake)).